Consider the following 453-residue polypeptide: Tubulin beta-1 chain (453 aa).

Positions 12, 71, 140, 144, 145, 146, 206, and 228 each coordinate GTP. Glu-71 is a Mg(2+) binding site. The interval 431 to 453 is disordered; sequence TADGVEGYEEEGYENDHPEDDEE. Residues 436-453 are compositionally biased toward acidic residues; it reads EGYEEEGYENDHPEDDEE.

This sequence belongs to the tubulin family. As to quaternary structure, dimer of alpha and beta chains. A typical microtubule is a hollow water-filled tube with an outer diameter of 25 nm and an inner diameter of 15 nM. Alpha-beta heterodimers associate head-to-tail to form protofilaments running lengthwise along the microtubule wall with the beta-tubulin subunit facing the microtubule plus end conferring a structural polarity. Microtubules usually have 13 protofilaments but different protofilament numbers can be found in some organisms and specialized cells. Requires Mg(2+) as cofactor.

Its subcellular location is the cytoplasm. It is found in the cytoskeleton. Tubulin is the major constituent of microtubules, a cylinder consisting of laterally associated linear protofilaments composed of alpha- and beta-tubulin heterodimers. Microtubules grow by the addition of GTP-tubulin dimers to the microtubule end, where a stabilizing cap forms. Below the cap, tubulin dimers are in GDP-bound state, owing to GTPase activity of alpha-tubulin. This Chondrus crispus (Carrageen Irish moss) protein is Tubulin beta-1 chain (TUBB).